A 193-amino-acid polypeptide reads, in one-letter code: Ion-translocating oxidoreductase complex subunit A (193 aa).

Transmembrane regions (helical) follow at residues 4-24, 39-59, 63-83, 102-122, 134-154, and 171-191; these read FLLLLIGTVLVNNFVLVQFLG, IGMSMATTFVLTLASLSSYLV, ILLPLGIEYLRTLSFILVIAV, LLGIFLPLITTNCAVLGVALL, VIYGFGAAVGFSLVLILFAAM, and SISMITAGLMSLAFLGFTGLV.

It belongs to the NqrDE/RnfAE family. In terms of assembly, the complex is composed of six subunits: RnfA, RnfB, RnfC, RnfD, RnfE and RnfG.

The protein localises to the cell inner membrane. Its function is as follows. Part of a membrane-bound complex that couples electron transfer with translocation of ions across the membrane. The chain is Ion-translocating oxidoreductase complex subunit A from Pseudoalteromonas atlantica (strain T6c / ATCC BAA-1087).